The primary structure comprises 319 residues: Olfactory receptor 56B4 (319 aa).

Over 1–31 (MDTSTSVTYDSSLQISQFILMGLPGIHEWQH) the chain is Extracellular. A helical membrane pass occupies residues 32–52 (WLSLPLTLLYLLALGANLLII). Over 53–60 (ITIQHETV) the chain is Cytoplasmic. Residues 61 to 81 (LHEPMYHLLGILAVVDIGLAT) form a helical membrane-spanning segment. At 82-105 (TIMPKILAIFWFDAKAISLPMCFA) the chain is on the extracellular side. Cys-103 and Cys-195 are joined by a disulfide. A helical transmembrane segment spans residues 106-126 (QIYAIHCFFCIESGIFLCMAV). The Cytoplasmic segment spans residues 127 to 145 (DRYIAICRPLQYPSIVTKA). Residues 146-166 (FVFKATGFIMLRNGLLTIPVP) traverse the membrane as a helical segment. Topologically, residues 167-202 (ILAAQRHYCSRNEIEHCLCSNLGVISLACDDITVNK) are extracellular. Residues 203-223 (FYQLMLAWVLVGSDMALVFSS) traverse the membrane as a helical segment. Residues 224-243 (YAVILHSVLRLNSAEAMSKA) lie on the Cytoplasmic side of the membrane. A helical membrane pass occupies residues 244–263 (LSTCSSHLILILFHTGIIVL). The Extracellular segment spans residues 264–277 (SVTHLAEKKIPLIP). The helical transmembrane segment at 278–298 (VFLNVLHNVIPPALNPLACAL) threads the bilayer. The Cytoplasmic segment spans residues 299-319 (RMHKLRLGFQRLLGLGQDVSK).

It belongs to the G-protein coupled receptor 1 family.

The protein localises to the cell membrane. Odorant receptor. This Homo sapiens (Human) protein is Olfactory receptor 56B4 (OR56B4).